The primary structure comprises 399 residues: MASSFNEETAKKLLTQVEFYFSDSNLPTDGFLNREVTKSKDGLVSLPLVCSFSRMRNLLGLGNINREDIPPRIVEEVANLLRTSDFLKVSNNGQRIGRGTKLSKPEEVLEQVHRRTLAASPFEYSIKMEDVSSFFSQYAKVNSVRLPPNIADKRRFCGTALVEFSSEQDTQDILRQSLVYAGADLVLIPKSDFDCQRENMIKQLGKSESHNEFRRGQIVKFALKWIASEEKVTNKEKPSALKNKIKEKEDKETGIADREKENGDNSCASLCKDNTDQLVVPPWNNSNSVSSEVLKDLFQRFGSVEHIEYSGGLDSGYVWFTDSETAMKARAAVEFVGGLVVKNNFSVALEAINGEMERELWKRLSSAELEGGKEGHKKEKGKDECFENVQPTKKARKEP.

In terms of domain architecture, HTH La-type RNA-binding spans 3–106 (SSFNEETAKK…GRGTKLSKPE (104 aa)). Residues 115–192 (RTLAASPFEY…ADLVLIPKSD (78 aa)) enclose the RRM domain. A xRRM domain is found at 269-399 (SLCKDNTDQL…QPTKKARKEP (131 aa)). The segment at 367 to 399 (AELEGGKEGHKKEKGKDECFENVQPTKKARKEP) is disordered. The span at 370 to 385 (EGGKEGHKKEKGKDEC) shows a compositional bias: basic and acidic residues.

As to expression, expressed ubiquitously (at protein level).

It is found in the nucleus. Its subcellular location is the nucleoplasm. It localises to the nucleolus. In terms of biological role, binds to the 3' poly(U) terminus of nascent RNA polymerase III transcripts, protecting them from exonuclease digestion and facilitating their folding and maturation. The sequence is that of La protein 2 (LA2) from Arabidopsis thaliana (Mouse-ear cress).